The chain runs to 80 residues: Small ribosomal subunit protein bS18A (80 aa).

It belongs to the bacterial ribosomal protein bS18 family. In terms of assembly, part of the 30S ribosomal subunit. Forms a tight heterodimer with protein bS6.

Its function is as follows. Binds as a heterodimer with protein bS6 to the central domain of the 16S rRNA, where it helps stabilize the platform of the 30S subunit. This Rhodococcus jostii (strain RHA1) protein is Small ribosomal subunit protein bS18A.